The sequence spans 306 residues: Golgi to ER traffic protein 2 (306 aa).

Positions 1 to 18 are enriched in basic and acidic residues; sequence MSEISDAEKRRILREKRQ. Residues 1–100 form a disordered region; that stretch reads MSEISDAEKR…PPGSAEQQNG (100 aa). Residues 1–172 lie on the Cytoplasmic side of the membrane; sequence MSEISDAEKR…VEAHNIAVNK (172 aa). Polar residues predominate over residues 34-57; sequence TGQTENSFLSTESPLDSRESTYPA. Residues 68–77 are compositionally biased toward basic and acidic residues; it reads DSTKQMDELL. Positions 78–90 are enriched in low complexity; it reads AKATSKTTSKASS. The span at 91 to 100 shows a compositional bias: polar residues; the sequence is PPGSAEQQNG. A helical transmembrane segment spans residues 173 to 193; the sequence is LKSYTILVKWLFFLLPYLYYI. The Lumenal portion of the chain corresponds to 194-214; the sequence is THSARDPFQHNAVNYVLDRSN. Residues 215–234 traverse the membrane as a helical segment; that stretch reads FFTVFTTFEIVALSVYYQLL. Residues 235-281 lie on the Cytoplasmic side of the membrane; sequence MSAEKSHNVNTLDNNSKILKLVSMVPPGLVPIPNLRGKVAQALQYWD. Residues 282-302 form a helical membrane-spanning segment; it reads VVSMYLTDLCFAIVLAGLFQY. Residues 303–306 lie on the Lumenal side of the membrane; sequence YHSM.

Belongs to the GET2 family. In terms of assembly, component of the Golgi to ER traffic (GET) complex, which is composed of GET1, GET2 and GET3. Within the complex, GET1 and GET2 form a heterotetramer which is stabilized by phosphatidylinositol binding and which binds to the GET3 homodimer.

Its subcellular location is the endoplasmic reticulum membrane. It is found in the golgi apparatus membrane. In terms of biological role, required for the post-translational delivery of tail-anchored (TA) proteins to the endoplasmic reticulum. Together with GET1, acts as a membrane receptor for soluble GET3, which recognizes and selectively binds the transmembrane domain of TA proteins in the cytosol. The GET complex cooperates with the HDEL receptor ERD2 to mediate the ATP-dependent retrieval of resident ER proteins that contain a C-terminal H-D-E-L retention signal from the Golgi to the ER. This Lachancea thermotolerans (strain ATCC 56472 / CBS 6340 / NRRL Y-8284) (Yeast) protein is Golgi to ER traffic protein 2.